The sequence spans 519 residues: Histidine ammonia-lyase (519 aa).

Positions 146-148 (ASG) form a cross-link, 5-imidazolinone (Ala-Gly). Position 147 is a 2,3-didehydroalanine (Ser) (Ser-147).

It belongs to the PAL/histidase family. Contains an active site 4-methylidene-imidazol-5-one (MIO), which is formed autocatalytically by cyclization and dehydration of residues Ala-Ser-Gly.

It localises to the cytoplasm. The enzyme catalyses L-histidine = trans-urocanate + NH4(+). The protein operates within amino-acid degradation; L-histidine degradation into L-glutamate; N-formimidoyl-L-glutamate from L-histidine: step 1/3. The chain is Histidine ammonia-lyase from Bradyrhizobium diazoefficiens (strain JCM 10833 / BCRC 13528 / IAM 13628 / NBRC 14792 / USDA 110).